The following is a 306-amino-acid chain: Type 3 secretion system translocon protein SctB (306 aa).

The chain crosses the membrane as a helical span at residues 128 to 152; the sequence is LMIAMAVVSGIMAATSTVASAFSIA.

The protein belongs to the SctB/YopD family. The core secretion machinery of the T3SS is composed of approximately 20 different proteins, including cytoplasmic components, a base, an export apparatus and a needle. This subunit is involved in the formation of a pore, called the translocon, in host membrane. Interacts with YopB/SctE and YopE. Together with YopB/SctE, forms a multimeric integral membrane complex with a mass of between 500 and 700 kDa. Interacts with its cognate chaperone SycD.

It is found in the secreted. The protein resides in the host membrane. Functionally, component of the type III secretion system (T3SS), also called injectisome, which is used to inject bacterial effector proteins into eukaryotic host cells. YopB/SctE and YopD/SctB are inserted into the host membrane where they form a pore and allow the translocation of effector proteins into the cytosol of target cells. Involved in pathogenesis. Essential for the establishment of Yersinia infections in a mouse model system, but not for the targeting of effector Yops. May modulate the host's immune response at a distance from the site of infection. The sequence is that of Type 3 secretion system translocon protein SctB from Yersinia enterocolitica.